Reading from the N-terminus, the 187-residue chain is UPF0301 protein ECA3925 (187 aa).

Belongs to the UPF0301 (AlgH) family.

This Pectobacterium atrosepticum (strain SCRI 1043 / ATCC BAA-672) (Erwinia carotovora subsp. atroseptica) protein is UPF0301 protein ECA3925.